The sequence spans 1527 residues: DNA-directed RNA polymerase subunit beta'' (1527 aa).

Residues Cys220, Cys296, Cys303, and Cys306 each coordinate Zn(2+). Basic and acidic residues-rich tracts occupy residues 644-661 (RTQEEEYRTREEEYRTRE) and 671-681 (PENKYRTREGE). Disordered regions lie at residues 644 to 681 (RTQEEEYRTREEEYRTREEDSEDEYESPENKYRTREGE) and 712 to 793 (YRTL…KKEG). Composition is skewed to acidic residues over residues 737 to 755 (GEYEILEEESEEEYGSSED) and 763 to 786 (TLEEDSEEDSEEDSEDEYGSPEED).

This sequence belongs to the RNA polymerase beta' chain family. RpoC2 subfamily. In terms of assembly, in plastids the minimal PEP RNA polymerase catalytic core is composed of four subunits: alpha, beta, beta', and beta''. When a (nuclear-encoded) sigma factor is associated with the core the holoenzyme is formed, which can initiate transcription. Zn(2+) is required as a cofactor.

The protein resides in the plastid. It localises to the chloroplast. The enzyme catalyses RNA(n) + a ribonucleoside 5'-triphosphate = RNA(n+1) + diphosphate. In terms of biological role, DNA-dependent RNA polymerase catalyzes the transcription of DNA into RNA using the four ribonucleoside triphosphates as substrates. This Zea mays (Maize) protein is DNA-directed RNA polymerase subunit beta''.